Reading from the N-terminus, the 209-residue chain is MTQDENHQLLERELAVDDPWRLDTSAFEQQRYAQMLRMSRRDGDAASALEVGCAAGAFTEMLAPLCERLTVVDVMPQAIERTRLRTGKWSHISWVTCDIQRFSTTEQFDLIVVAEVLYYLRDVVEMHAAIRNLVSMLAPDETLIFGSARDEICQRWGHAAGAETVIALFNESLSEIERRHCCTGSASEDCLIVRFLKPGGASAQSNAGH.

It belongs to the NodS family.

Its function is as follows. SAM-utilizing methyltransferase involved in nod factor synthesis. The protein is Nodulation protein S (nodS) of Bradyrhizobium diazoefficiens (strain JCM 10833 / BCRC 13528 / IAM 13628 / NBRC 14792 / USDA 110).